Consider the following 29-residue polypeptide: Cyclotide psyleio D (29 aa).

The segment at residues 1–29 (GLPVCGESCFGGTCNTPGCSCTWPVCTRD) is a cross-link (cyclopeptide (Gly-Asp)). 3 disulfide bridges follow: Cys-5–Cys-19, Cys-9–Cys-21, and Cys-14–Cys-26.

In terms of processing, this is a cyclic peptide.

Its function is as follows. Probably participates in a plant defense mechanism. This chain is Cyclotide psyleio D, found in Psychotria brachyceras.